Reading from the N-terminus, the 420-residue chain is E3 ubiquitin protein ligase DRIP2 (420 aa).

The RING-type zinc finger occupies 20 to 61 (CPLCDKLLRDATTISECLHTFCRKCIYEKITEDEIESCPVCD). Positions 113 to 123 (ISSLVVSTPRV) are enriched in polar residues. 2 disordered regions span residues 113-201 (ISSL…KDVD) and 226-289 (DPKS…TFGD). The segment covering 154 to 165 (KKEEEFGDDHVE) has biased composition (basic and acidic residues). 2 stretches are compositionally biased toward polar residues: residues 166–194 (SASS…SLSN) and 232–242 (GNASHNDVQGS). Residues 244-253 (TKTKDHKRKC) are compositionally biased toward basic residues. Positions 260-273 (SNNGDPTTSETATL) are enriched in polar residues. Residues 274 to 284 (KRTRRTRRKRS) are compositionally biased toward basic residues.

In terms of assembly, interacts with DREB2A. In terms of processing, auto-ubiquitinated. In terms of tissue distribution, expressed in roots, leaves and flowers.

The enzyme catalyses S-ubiquitinyl-[E2 ubiquitin-conjugating enzyme]-L-cysteine + [acceptor protein]-L-lysine = [E2 ubiquitin-conjugating enzyme]-L-cysteine + N(6)-ubiquitinyl-[acceptor protein]-L-lysine.. The protein operates within protein modification; protein ubiquitination. E3 ubiquitin-protein ligase that acts as a negative regulator of the response to water stress. Mediates ubiquitination and subsequent proteasomal degradation of the drought-induced transcriptional activator DREB2A. Functionally redundant with DRIP1. The protein is E3 ubiquitin protein ligase DRIP2 (DRIP2) of Arabidopsis thaliana (Mouse-ear cress).